The primary structure comprises 155 residues: Small ribosomal subunit protein uS7cz/uS7cy (155 aa).

The protein belongs to the universal ribosomal protein uS7 family. In terms of assembly, part of the 30S ribosomal subunit.

The protein resides in the plastid. It localises to the chloroplast. In terms of biological role, one of the primary rRNA binding proteins, it binds directly to 16S rRNA where it nucleates assembly of the head domain of the 30S subunit. This Calycanthus floridus var. glaucus (Eastern sweetshrub) protein is Small ribosomal subunit protein uS7cz/uS7cy (rps7-A).